Reading from the N-terminus, the 248-residue chain is PF03932 family protein CutC (248 aa).

Belongs to the CutC family. In terms of assembly, homodimer.

The protein localises to the cytoplasm. The sequence is that of PF03932 family protein CutC from Salmonella typhimurium (strain LT2 / SGSC1412 / ATCC 700720).